Reading from the N-terminus, the 1892-residue chain is Kinesin-like protein KIN-12E (1892 aa).

The disordered stretch occupies residues 1–28 (MAGHGAGGRRASTSRAAARRVEAETNEN). Residues 64-401 (NVQVLIRIRP…LKFAQRAKLI (338 aa)) enclose the Kinesin motor domain. ATP is bound at residue 145 to 152 (GQTGSGKT). Coiled coils occupy residues 406–438 (KVNE…QQNM), 486–526 (SLRR…TTVK), 1066–1139 (LFSN…LHEQ), 1303–1357 (KLLQ…LAEN), and 1396–1528 (ISET…SYQI). The segment covering 1633–1649 (LHESNSDTGHTKFEKPS) has biased composition (basic and acidic residues). The disordered stretch occupies residues 1633-1656 (LHESNSDTGHTKFEKPSGRTRGSG). Positions 1780-1841 (MDQRKADLLE…LVGSNQAIAE (62 aa)) form a coiled coil. The tract at residues 1870-1892 (HARHEHSRLQAAKSSRTRRGSHQ) is disordered.

The protein belongs to the TRAFAC class myosin-kinesin ATPase superfamily. Kinesin family. KIN-12 subfamily.

This Oryza sativa subsp. japonica (Rice) protein is Kinesin-like protein KIN-12E.